The sequence spans 386 residues: Patatin-17 (386 aa).

A signal peptide spans 1–23; the sequence is MATTKSFLILIFMILATTSSTFA. The 198-residue stretch at 32–229 folds into the PNPLA domain; that stretch reads LSIDGGGIRG…TVADPALLSI (198 aa). The short motif at 36–41 is the GXGXXG element; it reads GGGIRG. Residues 75-79 carry the GXSXG motif; it reads GTSTG. Residue Ser-77 is the Nucleophile of the active site. Residue Asn-202 is glycosylated (N-linked (GlcNAc...) asparagine). The active-site Proton acceptor is the Asp-215. The DGA/G motif lies at 215-217; the sequence is DGA. Residues 321 to 384 adopt a coiled-coil conformation; that stretch reads ENALTGTTTE…DRKKLRANKA (64 aa).

Belongs to the patatin family.

It is found in the vacuole. Non-specific lipolytic acyl hydrolase (LAH), an activity which is thought to be involved in the response of tubers to pathogens. Catalyzes the non-specific hydrolysis of phospholipids, glycolipids, sulfolipids, and mono- and diacylglycerols includng p-nitrophenyl caprate. Confers resistance to southern corn rootworm (SCRW). In Solanum cardiophyllum (Heartleaf nightshade), this protein is Patatin-17.